We begin with the raw amino-acid sequence, 537 residues long: Putative cysteine ligase BshC (537 aa).

A coiled-coil region spans residues 422–450 (IEKVEGMIEQQRRLNQDLLDEVAGNQNNI).

The protein belongs to the BshC family.

Involved in bacillithiol (BSH) biosynthesis. May catalyze the last step of the pathway, the addition of cysteine to glucosamine malate (GlcN-Mal) to generate BSH. The protein is Putative cysteine ligase BshC of Staphylococcus aureus (strain bovine RF122 / ET3-1).